A 212-amino-acid chain; its full sequence is Adapter protein MecA 2 (212 aa).

It belongs to the MecA family. As to quaternary structure, homodimer.

Its function is as follows. Enables the recognition and targeting of unfolded and aggregated proteins to the ClpC protease or to other proteins involved in proteolysis. Acts negatively in the development of competence by binding ComK and recruiting it to the ClpCP protease. When overexpressed, inhibits sporulation. Also involved in Spx degradation by ClpC. The sequence is that of Adapter protein MecA 2 (mecA2) from Halalkalibacterium halodurans (strain ATCC BAA-125 / DSM 18197 / FERM 7344 / JCM 9153 / C-125) (Bacillus halodurans).